Reading from the N-terminus, the 306-residue chain is Aspartate carbamoyltransferase catalytic subunit (306 aa).

Carbamoyl phosphate is bound by residues arginine 49 and threonine 50. Lysine 77 contacts L-aspartate. Carbamoyl phosphate is bound by residues arginine 99, histidine 127, and glutamine 130. L-aspartate-binding residues include arginine 160 and arginine 211. Residues alanine 250 and proline 251 each coordinate carbamoyl phosphate.

This sequence belongs to the aspartate/ornithine carbamoyltransferase superfamily. ATCase family. As to quaternary structure, heterododecamer (2C3:3R2) of six catalytic PyrB chains organized as two trimers (C3), and six regulatory PyrI chains organized as three dimers (R2).

It catalyses the reaction carbamoyl phosphate + L-aspartate = N-carbamoyl-L-aspartate + phosphate + H(+). It functions in the pathway pyrimidine metabolism; UMP biosynthesis via de novo pathway; (S)-dihydroorotate from bicarbonate: step 2/3. Catalyzes the condensation of carbamoyl phosphate and aspartate to form carbamoyl aspartate and inorganic phosphate, the committed step in the de novo pyrimidine nucleotide biosynthesis pathway. This Bacillus licheniformis (strain ATCC 14580 / DSM 13 / JCM 2505 / CCUG 7422 / NBRC 12200 / NCIMB 9375 / NCTC 10341 / NRRL NRS-1264 / Gibson 46) protein is Aspartate carbamoyltransferase catalytic subunit.